We begin with the raw amino-acid sequence, 369 residues long: Peptide chain release factor subunit 1 (369 aa).

Belongs to the eukaryotic release factor 1 family. As to quaternary structure, heterodimer of two subunits, one of which binds GTP.

It localises to the cytoplasm. Functionally, directs the termination of nascent peptide synthesis (translation) in response to the termination codons UAA, UAG and UGA. This chain is Peptide chain release factor subunit 1 (prf1), found in Saccharolobus solfataricus (strain ATCC 35092 / DSM 1617 / JCM 11322 / P2) (Sulfolobus solfataricus).